The sequence spans 1135 residues: LRR receptor-like serine/threonine-protein kinase RGI2 (1135 aa).

An N-terminal signal peptide occupies residues 1–35 (MSLQMPIPRKKALTVSHFSITLSLFLAFFISSTSA). Over 36 to 723 (STNEVSALIS…QRGVHSHRLR (688 aa)) the chain is Extracellular. A disulfide bridge connects residues C69 and C76. N101 and N117 each carry an N-linked (GlcNAc...) asparagine glycan. LRR repeat units lie at residues 105–129 (FTSLQKLVISNTNLTGAISSEIGDC), 130–153 (SELIVIDLSSNSLVGEIPSSLGKL), 154–177 (KNLQELCLNSNGLTGKIPPELGDC), and 179–203 (SLKNLEIFDNYLSENLPLELGKIST). Short sequence motifs (small peptide recognition) lie at residues 186 to 187 (FD), 208 to 211 (RAGG), 231 to 236 (VLGLAA), and Y259. 19 LRR repeats span residues 226–250 (CRNLKVLGLAATKISGSLPVSLGQL), 251–274 (SKLQSLSVYSTMLSGEIPKELGNC), 276–298 (ELINLFLYDNDLSGTLPKELGKL), 299–323 (QNLEKMLLWQNNLHGPIPEEIGFMK), 325–345 (LNAIDLSMNYFSGTIPKSFGN), 346–370 (LSNLQELMLSSNNITGSIPSILSNC), 372–395 (KLVQFQIDANQISGLIPPEIGLLK), 397–418 (LNIFLGWQNKLEGNIPDELAGC), 419–442 (QNLQALDLSQNYLTGSLPAGLFQL), 444–466 (NLTKLLLISNAISGVIPLEIGNC), 467–490 (TSLVRLRLVNNRITGEIPKGIGFL), 491–514 (QNLSFLDLSENNLSGPVPLEISNC), 516–538 (QLQMLNLSNNTLQGYLPLSLSSL), 539–562 (TKLQVLDVSSNDLTGKIPDSLGHL), 564–586 (SLNRLILSKNSFNGEIPSSLGHC), 587–610 (TNLQLLDLSSNNISGTIPEELFDI), 612–634 (DLDIALNLSWNSLDGFIPERISA), 635–658 (LNRLSVLDISHNMLSGDLSALSGL), and 659–683 (ENLVSLNISHNRFSGYLPDSKVFRQ). N273 is a glycosylation site (N-linked (GlcNAc...) asparagine). A Small peptide recognition motif is present at residues 281–283 (FLY). Positions 329 to 332 (DLSM) match the Small peptide recognition motif. N345 is a glycosylation site (N-linked (GlcNAc...) asparagine). The Small peptide recognition motif lies at 351–353 (ELM). 2 N-linked (GlcNAc...) asparagine glycosylation sites follow: N358 and N369. Short sequence motifs (small peptide recognition) lie at residues 399 to 403 (IFLGW) and 425 to 428 (DLSQ). N-linked (GlcNAc...) asparagine glycosylation occurs at N444. The short motif at 447 to 451 (KLLLI) is the Small peptide recognition element. N465 carries an N-linked (GlcNAc...) asparagine glycan. Positions 471–473 (RLR) match the Small peptide recognition motif. Residues N492, N502, N521, and N524 are each glycosylated (N-linked (GlcNAc...) asparagine). 2 N-linked (GlcNAc...) asparagine glycosylation sites follow: N598 and N618. N665 and N707 each carry an N-linked (GlcNAc...) asparagine glycan. Residues 724–744 (IAIGLLISVTAVLAVLGVLAV) traverse the membrane as a helical segment. Topologically, residues 745 to 1135 (IRAKQMIRDD…ATSNVRPNLK (391 aa)) are cytoplasmic. T777 carries the phosphothreonine modification. Residues 785-1066 (LVEGNVIGKG…KDVAAMLSEI (282 aa)) enclose the Protein kinase domain. ATP contacts are provided by residues 791–799 (IGKGCSGIV) and K813. Phosphotyrosine occurs at positions 868 and 907. D920 serves as the catalytic Proton acceptor. 2 positions are modified to phosphotyrosine: Y963 and Y970. Positions 1077–1135 (DGCSGSCNNGRERGKDDSTSSVMQQTAKYLRSSSTSFSASSLLYSSSSSATSNVRPNLK) are disordered. Residues 1108 to 1128 (SSSTSFSASSLLYSSSSSATS) are compositionally biased toward low complexity.

Belongs to the protein kinase superfamily. Ser/Thr protein kinase family. Binds to RGF peptides such as RGF1, GLV5/CLEL1/RGF2, GLV7/CLEL3/RGF3, GLV3/RGF4, GLV10/CLEL7/RGF5 and RGF10/CLELN; these interactions trigger the formation of heterodimers with SERK1. Interacts with UBP13. Phosphorylated and ubiquitinated upon interaction with RGF1, thus leading to activation a subsequent degradation. Stabilized by UBP12 and UBP13-mediated deubiquitination. Post-translationally, autophosphorylated. In terms of tissue distribution, specific to root meristems, especially in lateral root meristems (LRM).

The protein resides in the membrane. It catalyses the reaction L-seryl-[protein] + ATP = O-phospho-L-seryl-[protein] + ADP + H(+). The catalysed reaction is L-threonyl-[protein] + ATP = O-phospho-L-threonyl-[protein] + ADP + H(+). Together with RGI1, RGI3, RGI4 and RGI5, acts as a receptor of RGF peptides (e.g. RGF1, GLV5/CLEL1/RGF2, GLV7/CLEL3/RGF3, GLV3/RGF4, GLV10/CLEL7/RGF5 and RGF10/CLELN), peptide hormones which maintain the postembryonic root stem cell niche by regulating the expression levels and patterns of the transcription factor PLETHORA (PLT, e.g. PLT1 and PLT2). Links RGF peptides signal with their downstream components. In Arabidopsis thaliana (Mouse-ear cress), this protein is LRR receptor-like serine/threonine-protein kinase RGI2.